We begin with the raw amino-acid sequence, 272 residues long: Putative phosphoenolpyruvate synthase regulatory protein (272 aa).

152 to 159 (GVSRSGKT) lines the ADP pocket.

The protein belongs to the pyruvate, phosphate/water dikinase regulatory protein family. PSRP subfamily.

The enzyme catalyses [pyruvate, water dikinase] + ADP = [pyruvate, water dikinase]-phosphate + AMP + H(+). It catalyses the reaction [pyruvate, water dikinase]-phosphate + phosphate + H(+) = [pyruvate, water dikinase] + diphosphate. In terms of biological role, bifunctional serine/threonine kinase and phosphorylase involved in the regulation of the phosphoenolpyruvate synthase (PEPS) by catalyzing its phosphorylation/dephosphorylation. This Hahella chejuensis (strain KCTC 2396) protein is Putative phosphoenolpyruvate synthase regulatory protein.